Consider the following 956-residue polypeptide: MTLLLLPLLLASLLASCSCNKANKHKPWIEAEYQGIVMENDNTVLLNPPLFALDKDAPLRYAGEICGFRLHGSGVPFEAVILDKATGEGRIRAKEPMDCEAQKEHTFTIQAYDCGEGPDGANTKKSHKATVHVRVNDVNEFAPVFVERLYRAAVTEGKLYDRILRVEAIDGDCSPQYSQICYYEILTPNTPFLIDNDGNIENTEKLQYSGERLYKFTVTAYDCGKKRAADDAEVEIQVKPTCKPSWQGWNKRIEYAPGAGSLALFPGIRLETCDEPLWNIQATIELQTSHVAKGCDRDNYSERALRKLCGAATGEVDLLPMPGPNANWTAGLSVHYSQDSSQIYWFNGTQAVQVPLGGPSGLGSGPQDSLSDHFTLSFWMKHGVTPNKGKKEEETIVCNTVQNEDGFSHYSLTVHGCRIAFLYWPLLESARPVKFLWKLEQVCDDEWHHYALNLEFPTVTLYTDGISFDPALIHDNGLIHPPRREPALMIGACWTEGKNKEKEKGDNSTDTTQGDPLSIQRYFHGYLAGFSVRSGRLESREVIECLYACREGLDYRDFESLGKGMKVHVNPSQSLLTLEGDDVETFNHALQHVAYMNTLRFATPGVRPLRLTTAVKCFSEESCVSIPEVEGYVVVLQPDAPQILLSGTAHFARPAVDFEGTEGVPLFPDLQITCSISHQVEAKKDESWQGTVTDTRMSDEIVHNLDGCEISLVGDDLDPERESLLLDTTSLQQRGLELTNTSAYLTIAGVESITVYEEILRQARYRLRHGAALYARKFRLSCSEMNGRYSSNEFIVEVNVLHSMNRVAHPSHVLSSQQFLHRGHQPPPEMAGHSLASSHRNSMIPSAATLIIVVCVGFLVLMVVLGLVRIHSLHRRVSGAGGPPGASSDPKDPDLFWDDSALTIIVNPMESYQNRQACVTGAVGGQQEDEDSSDSEVADSPSSDERRIIETPPHRY.

The signal sequence occupies residues 1–19 (MTLLLLPLLLASLLASCSC). Over 20–847 (NKANKHKPWI…SHRNSMIPSA (828 aa)) the chain is Extracellular. 2 Cadherin domains span residues 29 to 145 (IEAE…APVF) and 146 to 246 (VERL…KPSW). Asn-299, Asn-327, Asn-347, Asn-507, and Asn-740 each carry an N-linked (GlcNAc...) asparagine glycan. A helical transmembrane segment spans residues 848-868 (ATLIIVVCVGFLVLMVVLGLV). Residues 869–956 (RIHSLHRRVS…RIIETPPHRY (88 aa)) lie on the Cytoplasmic side of the membrane. The tract at residues 917–956 (ACVTGAVGGQQEDEDSSDSEVADSPSSDERRIIETPPHRY) is disordered. Residues 927–937 (QEDEDSSDSEV) are compositionally biased toward acidic residues. Positions 943–956 (SDERRIIETPPHRY) are enriched in basic and acidic residues.

The protein belongs to the calsyntenin family. In terms of assembly, interacts (via cadherin domains) with both alpha and beta isoforms of neurexins (NRXN1, NRXN2 and NRXN3). Directly interacts with APBA2. Forms a tripartite complex with APBA2 and APP. Interacts with low affinity with KLC1. Interacts with SLC23A2/SVCT2. Proteolytically processed under normal cellular conditions. A primary zeta-cleavage generates a large extracellular (soluble) N-terminal domain (sAlc) and a short C-terminal transmembrane fragment (CTF1). A secondary cleavage catalyzed by gamma-secretase within the transmembrane domain releases the beta-Alc-beta chain in the extracellular milieu and produces an intracellular fragment (AlcICD). This processing is strongly suppressed in the tripartite complex formed with APBA2 and APP, which seems to prevent the association with gamma-secretase.

Its subcellular location is the postsynaptic cell membrane. The protein resides in the endoplasmic reticulum membrane. It localises to the golgi apparatus membrane. The protein localises to the cell projection. It is found in the dendrite. In terms of biological role, postsynaptic adhesion molecule that binds to presynaptic neurexins to mediate both excitatory and inhibitory synapse formation. Promotes synapse development by acting as a cell adhesion molecule at the postsynaptic membrane, which associates with both neurexin-alpha and neurexin-beta proteins at the presynaptic membrane. Regulates the balance between excitatory and inhibitory synapses by inhibiting formation of excitatory parallel-fiber synapses and promoting formation of inhibitory synapses in the same neuron. May also be involved in ascorbate (vitamin C) uptake via its interaction with SLC23A2/SVCT2. Complex formation with APBA2 and APP, stabilizes APP metabolism and enhances APBA2-mediated suppression of beta-APP40 secretion, due to the retardation of intracellular APP maturation. In Pongo abelii (Sumatran orangutan), this protein is Calsyntenin-3 (CLSTN3).